Here is a 200-residue protein sequence, read N- to C-terminus: Dephospho-CoA kinase (200 aa).

Positions Thr4–Lys200 constitute a DPCK domain. An ATP-binding site is contributed by Ala12 to Thr17.

Belongs to the CoaE family.

It is found in the cytoplasm. The enzyme catalyses 3'-dephospho-CoA + ATP = ADP + CoA + H(+). It functions in the pathway cofactor biosynthesis; coenzyme A biosynthesis; CoA from (R)-pantothenate: step 5/5. Its function is as follows. Catalyzes the phosphorylation of the 3'-hydroxyl group of dephosphocoenzyme A to form coenzyme A. This chain is Dephospho-CoA kinase, found in Listeria monocytogenes serovar 1/2a (strain ATCC BAA-679 / EGD-e).